A 179-amino-acid chain; its full sequence is Large ribosomal subunit protein uL6 (179 aa).

Belongs to the universal ribosomal protein uL6 family. Part of the 50S ribosomal subunit.

Functionally, this protein binds to the 23S rRNA, and is important in its secondary structure. It is located near the subunit interface in the base of the L7/L12 stalk, and near the tRNA binding site of the peptidyltransferase center. The polypeptide is Large ribosomal subunit protein uL6 (Bacillus anthracis).